We begin with the raw amino-acid sequence, 660 residues long: DNA ligase (660 aa).

NAD(+) contacts are provided by residues 32 to 36 (DEVYD), 81 to 82 (SM), and E112. The active-site N6-AMP-lysine intermediate is K114. The NAD(+) site is built by R135, E169, K284, and K308. Residues C402, C405, C418, and C423 each coordinate Zn(2+). Residues 578-660 (VENSPLAHKT…ELLKEAGIEA (83 aa)) enclose the BRCT domain.

It belongs to the NAD-dependent DNA ligase family. LigA subfamily. It depends on Mg(2+) as a cofactor. The cofactor is Mn(2+).

It catalyses the reaction NAD(+) + (deoxyribonucleotide)n-3'-hydroxyl + 5'-phospho-(deoxyribonucleotide)m = (deoxyribonucleotide)n+m + AMP + beta-nicotinamide D-nucleotide.. Functionally, DNA ligase that catalyzes the formation of phosphodiester linkages between 5'-phosphoryl and 3'-hydroxyl groups in double-stranded DNA using NAD as a coenzyme and as the energy source for the reaction. It is essential for DNA replication and repair of damaged DNA. The polypeptide is DNA ligase (Nitratiruptor sp. (strain SB155-2)).